We begin with the raw amino-acid sequence, 279 residues long: Putative methyltransferase Jann_4284 (279 aa).

This is Putative methyltransferase Jann_4284 from Jannaschia sp. (strain CCS1).